Reading from the N-terminus, the 253-residue chain is Small ribosomal subunit protein uS3 (253 aa).

Positions 39 to 109 (IRNYVLARLK…EVKIDVVEVI (71 aa)) constitute a KH type-2 domain. Residues 220 to 253 (DEMKKMKDRRNDGGAKGRDSRDNRSKRRSRSKRS) are disordered. Positions 221–242 (EMKKMKDRRNDGGAKGRDSRDN) are enriched in basic and acidic residues. A compositionally biased stretch (basic residues) spans 243–253 (RSKRRSRSKRS).

Belongs to the universal ribosomal protein uS3 family. Part of the 30S ribosomal subunit. Forms a tight complex with proteins S10 and S14.

Binds the lower part of the 30S subunit head. Binds mRNA in the 70S ribosome, positioning it for translation. The chain is Small ribosomal subunit protein uS3 from Chlorobium chlorochromatii (strain CaD3).